Consider the following 524-residue polypeptide: Cytochrome P450 704B1 (524 aa).

Residues 2–22 traverse the membrane as a helical segment; the sequence is SLCLVIACMVTSWIFLHRWGQ. Heme is bound at residue C471.

This sequence belongs to the cytochrome P450 family. Heme is required as a cofactor.

The protein resides in the membrane. The catalysed reaction is an omega-methyl-long-chain fatty acid + reduced [NADPH--hemoprotein reductase] + O2 = an omega-hydroxy-long-chain fatty acid + oxidized [NADPH--hemoprotein reductase] + H2O + H(+). In terms of biological role, involved in pollen wall development. Catalyzes the conversion of long-chain fatty acids to the corresponding omega-hydroxylated fatty acids. Omega-hydroxylated fatty acids, together with in-chain hydroxylated fatty acids, are key monomeric aliphatic building blocks for sporopollenin synthesis during exine formation. In Arabidopsis thaliana (Mouse-ear cress), this protein is Cytochrome P450 704B1 (CYP704B1).